The sequence spans 492 residues: Ketol-acid reductoisomerase (NADP(+)) (492 aa).

Residues 14-208 form the KARI N-terminal Rossmann domain; it reads LDQLGRCRFM…GGHKAGVLES (195 aa). NADP(+) is bound by residues 45–48, arginine 68, arginine 76, serine 78, and 108–110; these read CGAQ and DKQ. Histidine 132 is a catalytic residue. Glycine 158 is an NADP(+) binding site. 2 consecutive KARI C-terminal knotted domains span residues 209-344 and 345-485; these read SFVA…NAPK and YDGK…MTDM. Mg(2+)-binding residues include aspartate 217, glutamate 221, glutamate 389, and glutamate 393. Serine 414 contributes to the substrate binding site.

This sequence belongs to the ketol-acid reductoisomerase family. Mg(2+) serves as cofactor.

The enzyme catalyses (2R)-2,3-dihydroxy-3-methylbutanoate + NADP(+) = (2S)-2-acetolactate + NADPH + H(+). The catalysed reaction is (2R,3R)-2,3-dihydroxy-3-methylpentanoate + NADP(+) = (S)-2-ethyl-2-hydroxy-3-oxobutanoate + NADPH + H(+). It functions in the pathway amino-acid biosynthesis; L-isoleucine biosynthesis; L-isoleucine from 2-oxobutanoate: step 2/4. Its pathway is amino-acid biosynthesis; L-valine biosynthesis; L-valine from pyruvate: step 2/4. Functionally, involved in the biosynthesis of branched-chain amino acids (BCAA). Catalyzes an alkyl-migration followed by a ketol-acid reduction of (S)-2-acetolactate (S2AL) to yield (R)-2,3-dihydroxy-isovalerate. In the isomerase reaction, S2AL is rearranged via a Mg-dependent methyl migration to produce 3-hydroxy-3-methyl-2-ketobutyrate (HMKB). In the reductase reaction, this 2-ketoacid undergoes a metal-dependent reduction by NADPH to yield (R)-2,3-dihydroxy-isovalerate. The sequence is that of Ketol-acid reductoisomerase (NADP(+)) from Haemophilus influenzae (strain PittEE).